The following is a 154-amino-acid chain: D-aminoacyl-tRNA deacylase (154 aa).

The short motif at 142–143 (GP) is the Gly-cisPro motif, important for rejection of L-amino acids element.

The protein belongs to the DTD family. Homodimer.

The protein resides in the cytoplasm. It carries out the reaction glycyl-tRNA(Ala) + H2O = tRNA(Ala) + glycine + H(+). The catalysed reaction is a D-aminoacyl-tRNA + H2O = a tRNA + a D-alpha-amino acid + H(+). Functionally, an aminoacyl-tRNA editing enzyme that deacylates mischarged D-aminoacyl-tRNAs. Also deacylates mischarged glycyl-tRNA(Ala), protecting cells against glycine mischarging by AlaRS. Acts via tRNA-based rather than protein-based catalysis; rejects L-amino acids rather than detecting D-amino acids in the active site. By recycling D-aminoacyl-tRNA to D-amino acids and free tRNA molecules, this enzyme counteracts the toxicity associated with the formation of D-aminoacyl-tRNA entities in vivo and helps enforce protein L-homochirality. The chain is D-aminoacyl-tRNA deacylase from Acidovorax sp. (strain JS42).